The primary structure comprises 124 residues: Large ribosomal subunit protein bL12 (124 aa).

Belongs to the bacterial ribosomal protein bL12 family. In terms of assembly, homodimer. Part of the ribosomal stalk of the 50S ribosomal subunit. Forms a multimeric L10(L12)X complex, where L10 forms an elongated spine to which 2 to 4 L12 dimers bind in a sequential fashion. Binds GTP-bound translation factors.

Functionally, forms part of the ribosomal stalk which helps the ribosome interact with GTP-bound translation factors. Is thus essential for accurate translation. This chain is Large ribosomal subunit protein bL12, found in Borreliella afzelii (strain PKo) (Borrelia afzelii).